The chain runs to 337 residues: Glutathione transferase 3 (337 aa).

Residues 1 to 239 (MPTKSTFSRW…NKYQYTLDFC (239 aa)) lie on the Cytoplasmic side of the membrane. 4 positions are modified to phosphoserine: Ser66, Ser72, Ser99, and Ser116. The interval 66–95 (SMTVDQSKDERNEYGSGSGNGSGSGSCDTA) is disordered. The disordered stretch occupies residues 107–132 (KEDDDEKPQSGDETSATKPLSSRNAN). Polar residues predominate over residues 117 to 132 (GDETSATKPLSSRNAN). Residues 240–260 (LPILTWLLFFRGIPTLVSYYI) traverse the membrane as a helical segment. The Perinuclear space segment spans residues 261-313 (NFIRYDLNIELDPMTFNLTKFLISLAIFKTCNNKNIDFHSFRCVNQLWTQLCT). Residues 314–336 (VNRSLGMVPLVFSMVSCLLTLYV) form a helical membrane-spanning segment. Position 337 (Leu337) is a topological domain, cytoplasmic.

The protein localises to the nucleus membrane. The polypeptide is Glutathione transferase 3 (GTT3) (Saccharomyces cerevisiae (strain ATCC 204508 / S288c) (Baker's yeast)).